A 110-amino-acid chain; its full sequence is Lichenan-specific phosphotransferase enzyme IIA component (110 aa).

The PTS EIIA type-3 domain maps to 3–101 (EEMEQIIFQI…AAEIIELYEK (99 aa)). His77 acts as the Tele-phosphohistidine intermediate; by HPr in catalysis.

It localises to the cytoplasm. The phosphoenolpyruvate-dependent sugar phosphotransferase system (PTS), a major carbohydrate active -transport system, catalyzes the phosphorylation of incoming sugar substrates concomitant with their translocation across the cell membrane. This system is involved in lichenan transport. This is Lichenan-specific phosphotransferase enzyme IIA component (licA) from Bacillus subtilis (strain 168).